Consider the following 434-residue polypeptide: Trigger factor (434 aa).

The region spanning 160–245 (DDKVKMNFIG…LTEVQAANLP (86 aa)) is the PPIase FKBP-type domain.

It belongs to the FKBP-type PPIase family. Tig subfamily.

It is found in the cytoplasm. It catalyses the reaction [protein]-peptidylproline (omega=180) = [protein]-peptidylproline (omega=0). Involved in protein export. Acts as a chaperone by maintaining the newly synthesized protein in an open conformation. Functions as a peptidyl-prolyl cis-trans isomerase. In Shewanella frigidimarina (strain NCIMB 400), this protein is Trigger factor.